The following is a 393-amino-acid chain: S-adenosylmethionine synthase (393 aa).

An ATP-binding site is contributed by His-16. Residue Asp-18 participates in Mg(2+) binding. A K(+)-binding site is contributed by Glu-44. Residues Glu-57 and Gln-100 each coordinate L-methionine. Residues 100 to 110 (QSNDIAQGVDH) form a flexible loop region. Residues 167–169 (DAK), 238–239 (RF), Asp-247, 253–254 (RK), Ala-270, and Lys-274 each bind ATP. Asp-247 serves as a coordination point for L-methionine. Residue Lys-278 coordinates L-methionine.

Belongs to the AdoMet synthase family. In terms of assembly, homotetramer; dimer of dimers. The cofactor is Mg(2+). It depends on K(+) as a cofactor.

It localises to the cytoplasm. The catalysed reaction is L-methionine + ATP + H2O = S-adenosyl-L-methionine + phosphate + diphosphate. Its pathway is amino-acid biosynthesis; S-adenosyl-L-methionine biosynthesis; S-adenosyl-L-methionine from L-methionine: step 1/1. Its function is as follows. Catalyzes the formation of S-adenosylmethionine (AdoMet) from methionine and ATP. The overall synthetic reaction is composed of two sequential steps, AdoMet formation and the subsequent tripolyphosphate hydrolysis which occurs prior to release of AdoMet from the enzyme. This Polaromonas sp. (strain JS666 / ATCC BAA-500) protein is S-adenosylmethionine synthase.